The primary structure comprises 400 residues: Diphosphomevalonate decarboxylase (400 aa).

(R)-5-diphosphomevalonate contacts are provided by residues 19 to 22, Arg-75, 154 to 159, and Thr-210; these read YWGK and SGSACR. A disordered region spans residues 381–400; that stretch reads DGPRTLGPEEALLSPDGLPK.

The protein belongs to the diphosphomevalonate decarboxylase family.

It catalyses the reaction (R)-5-diphosphomevalonate + ATP = isopentenyl diphosphate + ADP + phosphate + CO2. It participates in isoprenoid biosynthesis; isopentenyl diphosphate biosynthesis via mevalonate pathway; isopentenyl diphosphate from (R)-mevalonate: step 3/3. Its function is as follows. Diphosphomevalonate decarboxylase; part of the second module of ergosterol biosynthesis pathway that includes the middle steps of the pathway. The second module involves the formation of farnesyl diphosphate, which is also an important intermediate in the biosynthesis of ubiquinone, dolichol, heme and prenylated proteins. This module also plays a key role in the biosynthesis of triterpenes such as ganoderic acids (GA), a group of highly oxygenated lanostane-type triterpenoids which are well recognized as a main group of unique bioactive compounds in the medicinal mushroom Ganoderma lucidum. Activity by the mevalonate kinase first converts mevalonate into 5-phosphomevalonate. 5-phosphomevalonate is then further converted to 5-diphosphomevalonate by the phosphomevalonate kinase. The diphosphomevalonate decarboxylase MVD then produces isopentenyl diphosphate. The isopentenyl-diphosphate delta-isomerase then catalyzes the 1,3-allylic rearrangement of the homoallylic substrate isopentenyl (IPP) to its highly electrophilic allylic isomer, dimethylallyl diphosphate (DMAPP). Finally the farnesyl diphosphate synthase FPS catalyzes the sequential condensation of isopentenyl pyrophosphate with dimethylallyl pyrophosphate, and then with the resultant geranylpyrophosphate to the ultimate product farnesyl pyrophosphate. This Ganoderma lucidum (Ling zhi medicinal fungus) protein is Diphosphomevalonate decarboxylase.